A 271-amino-acid polypeptide reads, in one-letter code: p-hydroxybenzoate hydroxylase transcriptional activator (271 aa).

One can recognise an HTH iclR-type domain in the interval 23 to 83; the sequence is IAGLAKGLAL…TDEHYFWLTH (61 aa). Positions 45-64 form a DNA-binding region, H-T-H motif; it reads VTQVAERTGISRTAARRYLK. An IclR-ED domain is found at 98 to 271; that stretch reads LPKVAQSFLN…NTANELRNLV (174 aa).

Its function is as follows. Positive regulator of the pobA gene for p-hydroxybenzoate hydroxylase. This Acinetobacter baylyi (strain ATCC 33305 / BD413 / ADP1) protein is p-hydroxybenzoate hydroxylase transcriptional activator (pobR).